A 955-amino-acid polypeptide reads, in one-letter code: Eukaryotic translation initiation factor 3 subunit C (955 aa).

2 disordered regions span residues 1–22 (MSRF…SEPV) and 157–299 (RAAP…EEGW). Residues 162 to 183 (DFAEEEEDDEREDEKGSDEEEE) show a composition bias toward acidic residues. A compositionally biased stretch (low complexity) spans 206 to 218 (VKPVADSDSSDWG). Acidic residues predominate over residues 219–229 (SDSDSDSTSSD). Residues 230-250 (EDAKYTSIRDRFLKKPEKGTE) show a composition bias toward basic and acidic residues. The segment covering 288-297 (MFDENEEEEE) has biased composition (acidic residues). In terms of domain architecture, PCI spans 658–834 (FHMHINLELL…ETIVMHRSEP (177 aa)). The disordered stretch occupies residues 865–955 (NFFQRGGNQG…RNVEYQNKAE (91 aa)). The segment covering 882–894 (YRNQNQNQNWNNN) has biased composition (low complexity). Residues 911–955 (GEGREQREHHRDHHRDQREHREHQNREFREQREQMRNVEYQNKAE) show a composition bias toward basic and acidic residues.

This sequence belongs to the eIF-3 subunit C family. As to quaternary structure, component of the eukaryotic translation initiation factor 3 (eIF-3) complex.

It is found in the cytoplasm. Functionally, component of the eukaryotic translation initiation factor 3 (eIF-3) complex, which is involved in protein synthesis of a specialized repertoire of mRNAs and, together with other initiation factors, stimulates binding of mRNA and methionyl-tRNAi to the 40S ribosome. The eIF-3 complex specifically targets and initiates translation of a subset of mRNAs involved in cell proliferation. This Anopheles gambiae (African malaria mosquito) protein is Eukaryotic translation initiation factor 3 subunit C.